A 121-amino-acid chain; its full sequence is Nitrogenase-stabilizing/protective protein NifW (121 aa).

Belongs to the NifW family. As to quaternary structure, homotrimer; associates with NifD.

May protect the nitrogenase Fe-Mo protein from oxidative damage. This chain is Nitrogenase-stabilizing/protective protein NifW, found in Methylacidiphilum infernorum (isolate V4) (Methylokorus infernorum (strain V4)).